The primary structure comprises 54 residues: Ovomucoid (54 aa).

The 51-residue stretch at valine 4–cysteine 54 folds into the Kazal-like domain. Cystine bridges form between cysteine 6–cysteine 36, cysteine 14–cysteine 33, and cysteine 22–cysteine 54. N-linked (GlcNAc...) asparagine glycosylation occurs at asparagine 43.

The protein resides in the secreted. This chain is Ovomucoid, found in Caracara plancus (Southern caracara).